Here is an 874-residue protein sequence, read N- to C-terminus: Probable inorganic carbon transporter subunit DabA (874 aa).

Zn(2+) is bound by residues cysteine 398, aspartate 400, histidine 580, and cysteine 595.

Belongs to the inorganic carbon transporter (TC 9.A.2) DabA family. In terms of assembly, forms a complex with DabB. It depends on Zn(2+) as a cofactor.

The protein localises to the cell membrane. Functionally, part of an energy-coupled inorganic carbon pump. The sequence is that of Probable inorganic carbon transporter subunit DabA from Bacillus cereus (strain AH187).